The primary structure comprises 938 residues: Protein translocase subunit SecA (938 aa).

Residues Gln-90, 108–112, and Asp-504 contribute to the ATP site; that span reads GEGKT.

It belongs to the SecA family. As to quaternary structure, monomer and homodimer. Part of the essential Sec protein translocation apparatus which comprises SecA, SecYEG and auxiliary proteins SecDF. Other proteins may also be involved.

The protein localises to the cell inner membrane. Its subcellular location is the cellular thylakoid membrane. It is found in the cytoplasm. It catalyses the reaction ATP + H2O + cellular proteinSide 1 = ADP + phosphate + cellular proteinSide 2.. Its function is as follows. Part of the Sec protein translocase complex. Interacts with the SecYEG preprotein conducting channel. Has a central role in coupling the hydrolysis of ATP to the transfer of proteins into and across the cell membrane, serving as an ATP-driven molecular motor driving the stepwise translocation of polypeptide chains across the membrane. Probably participates in protein translocation into and across both the cytoplasmic and thylakoid membranes in cyanobacterial cells. This chain is Protein translocase subunit SecA, found in Microcystis aeruginosa (strain NIES-843 / IAM M-2473).